Here is a 243-residue protein sequence, read N- to C-terminus: Peptidyl-prolyl cis-trans isomerase Mip (243 aa).

A signal peptide spans 1-14; the sequence is MKNILSWMLMFAVA. A PPIase FKBP-type domain is found at 152–235; that stretch reads KPNALLHYTG…IFEVKLIEAN (84 aa).

Belongs to the FKBP-type PPIase family.

It is found in the cell outer membrane. The catalysed reaction is [protein]-peptidylproline (omega=180) = [protein]-peptidylproline (omega=0). PPIases accelerate the folding of proteins. This Chlamydia muridarum (strain MoPn / Nigg) protein is Peptidyl-prolyl cis-trans isomerase Mip (mip).